A 153-amino-acid polypeptide reads, in one-letter code: Probable Brix domain-containing ribosomal biogenesis protein (153 aa).

The Brix domain maps to 1–153 (MQVLTTSRKP…RILKISRSSR (153 aa)).

Probably involved in the biogenesis of the ribosome. The polypeptide is Probable Brix domain-containing ribosomal biogenesis protein (Archaeoglobus fulgidus (strain ATCC 49558 / DSM 4304 / JCM 9628 / NBRC 100126 / VC-16)).